A 221-amino-acid chain; its full sequence is Ras-related protein Rab-27A (221 aa).

Ser-2 carries the post-translational modification N-acetylserine. Ser-2 is modified (phosphoserine). 16-24 contributes to the GTP binding site; it reads GDSGVGKTS. The short motif at 38-46 is the Effector region element; sequence FITTVGIDF. GTP contacts are provided by residues 74 to 78, 133 to 136, and 163 to 165; these read DTAGQ, NKSD, and SAA. Cys-123 and Cys-188 are oxidised to a cystine. S-geranylgeranyl cysteine attachment occurs at residues Cys-219 and Cys-221. Position 221 is a cysteine methyl ester (Cys-221).

It belongs to the small GTPase superfamily. Rab family. As to quaternary structure, binds SYTL1, SLAC2B, MYRIP, SYTL3, SYTL4 and SYTL5. Interacts with RPH3A and RPH3A. Binds MLPH and SYTL2. Interacts with UNC13D. Does not interact with the BLOC-3 complex (heterodimer of HPS1 and HPS4). Interacts (GDP-bound form preferentially) with DENND10. In terms of tissue distribution, found in all the examined tissues except in brain. Low expression was found in thymus, kidney, muscle and placenta. Detected in melanocytes, and in most tumor cell lines examined. Expressed in cytotoxic T-lymphocytes (CTL) and mast cells.

Its subcellular location is the membrane. It localises to the melanosome. The protein localises to the late endosome. The protein resides in the lysosome. It catalyses the reaction GTP + H2O = GDP + phosphate + H(+). Its activity is regulated as follows. Regulated by guanine nucleotide exchange factors (GEFs) which promote the exchange of bound GDP for free GTP, GTPase activating proteins (GAPs) which increase the GTP hydrolysis activity, and GDP dissociation inhibitors which inhibit the dissociation of the nucleotide from the GTPase. Activated by GEFs such as DENND10. Small GTPase which cycles between active GTP-bound and inactive GDP-bound states. In its active state, binds to a variety of effector proteins to regulate homeostasis of late endocytic pathway, including endosomal positioning, maturation and secretion. Plays a role in cytotoxic granule exocytosis in lymphocytes. Required for both granule maturation and granule docking and priming at the immunologic synapse. In Homo sapiens (Human), this protein is Ras-related protein Rab-27A (RAB27A).